The primary structure comprises 657 residues: Glycogen debranching enzyme (657 aa).

Asp-336 serves as the catalytic Nucleophile. Glu-371 acts as the Proton donor in catalysis. A disordered region spans residues 460-479 (ANGEENRDGTNNNYSNNHGK).

The protein belongs to the glycosyl hydrolase 13 family.

It carries out the reaction Hydrolysis of (1-&gt;6)-alpha-D-glucosidic linkages to branches with degrees of polymerization of three or four glucose residues in limit dextrin.. Its pathway is glycan degradation; glycogen degradation. Removes maltotriose and maltotetraose chains that are attached by 1,6-alpha-linkage to the limit dextrin main chain, generating a debranched limit dextrin. This chain is Glycogen debranching enzyme, found in Escherichia coli O127:H6 (strain E2348/69 / EPEC).